The following is a 372-amino-acid chain: MLSTAFITLVRSGRNQVKKRVLLSSILLQDHRQMTPACYCSISEPRCSRFDPDGSGQPATWDNFGIWDNRIDEPILLPPSIKYGKPIPKISLENVGCASLIGKRKENEDRFGFAQLTEEVLYFAVYDGHGGPAAADFCHTHMEKCVTDLLPREKDLETVLTLAFLEIDKAFSSYAHLSADASLLTSGTTATVALLRDGVELVVASVGDSRALLCRKGKPMKLTTDHTPERKDEKERIKKCGGFVAWNSLGQPHVNGRLAMTRSIGDLDLKASGVIAEPETTRIKLYHADDSFLVLTTDGINFMVNSQEICDFVNQCHDPKEAAHAVTEQAIQYGTEDNSTAVVVPFGAWGKYKNSEITFSFSRSFASSGRWA.

The N-terminal 29 residues, 1 to 29, are a transit peptide targeting the mitochondrion; the sequence is MLSTAFITLVRSGRNQVKKRVLLSSILLQ. The critical for association with the BCKDH complex stretch occupies residues 46-61; that stretch reads RCSRFDPDGSGQPATW. The PPM-type phosphatase domain maps to 94–346; sequence NVGCASLIGK…DNSTAVVVPF (253 aa). Mn(2+) contacts are provided by aspartate 127 and glycine 128. Residue serine 248 is modified to Phosphoserine. The Mn(2+) site is built by aspartate 298 and aspartate 337.

It belongs to the PP2C family. As to quaternary structure, interacts with E1 and E2 components of the branched-chain alpha-ketoacid dehydrogenase (BCKDH) complex. Interacts with both BCKDHA and BCKDHB chains of the E1 subunit. Interacts with the 24-meric DBT/E2 core of the BCKD complex with a 1:1 stoichiometry; the N-terminal region (residues 49-61) of PPM1K and C-terminal linker of the lipoyl domain of DBT/E2 (residues 145-160) are critical for this interaction whereas the lipoyl prosthetic group is dispensable. Competes with BCKDK for binding to DBT/E2; this interaction is modulated by branched-chain alpha-keto acids (BCKAs). At steady state, BCKDH holoenzyme preferentially binds BCKDK and BCKDHA/E1 is phosphorylated. In response to high levels of BCKAs, BCKDK is replaced by PPM1K leading to BCKDHA/E1 dephosphorylation. It depends on Mn(2+) as a cofactor.

The protein resides in the mitochondrion matrix. The enzyme catalyses O-phospho-L-seryl-[3-methyl-2-oxobutanoate dehydrogenase] + H2O = L-seryl-[3-methyl-2-oxobutanoate dehydrogenase] + phosphate. The catalysed reaction is O-phospho-L-seryl-[protein] + H2O = L-seryl-[protein] + phosphate. The protein operates within protein modification. In terms of biological role, serine/threonine-protein phosphatase component of macronutrients metabolism. Together with BCKDK serves as a metabolic regulatory node that coordinates branched-chain amino acids (BCAAs) and protein synthesis with glucose and lipid metabolism via two distinct phosphoprotein targets: BCKDHA/E1a subunit of the branched-chain alpha-ketoacid dehydrogenase (BCKDH) complex and ACLY, a lipogenic enzyme of Krebs cycle. At high levels of branched-chain ketoacids (BCKAs), dephosphorylates and activates mitochondrial BCKDH complex, a multisubunit complex consisting of three components, heterotetrameric E1 composed of BCKDHA and BCKDHB chains, 24-meric E2 core composed of DBT and homodimeric E3 composed of DLD, each involved in different steps of BCAA catabolism. Tightly associates with the E2 subunit of BCKDH complex and dephosphorylates Ser-333 of BCKDHA chain of the E1 subunit likely through on-off binding to individual E2 subunits of the 24-meric E2 core to increase the efficiency of the dephosphorylation reaction. Appears to dephosphorylate and inactivate cytosolic ACLY in response to changes of cellular carbohydrate abundance. Overnutrition and in particular high-fructose diet, activates MLXIPL/ChREBP leading to increased BCKDK to PPM1K ratio, phosphorylation of ACLY on Ser-454 and activation of its enzymatic activity that ultimately results in the generation of acetyl-CoA and malonyl-CoA immediate substrates of de novo lipogenesis. Recognizes phosphosites having SxS or RxxS motifs and strictly depends on Mn(2+) ions for the phosphatase activity. Regulates Ca(2+)-induced opening of mitochondrial transition pore and apoptotic cell death. The sequence is that of Protein phosphatase Mn(2+)-dependent 1K (Ppm1k) from Rattus norvegicus (Rat).